The following is a 556-amino-acid chain: Arginine--tRNA ligase (556 aa).

Residues 133–143 carry the 'HIGH' region motif; that stretch reads ANPTGPIHIGH.

It belongs to the class-I aminoacyl-tRNA synthetase family. As to quaternary structure, monomer.

The protein resides in the cytoplasm. The catalysed reaction is tRNA(Arg) + L-arginine + ATP = L-arginyl-tRNA(Arg) + AMP + diphosphate. The polypeptide is Arginine--tRNA ligase (Dehalococcoides mccartyi (strain ATCC BAA-2100 / JCM 16839 / KCTC 5957 / BAV1)).